The sequence spans 38 residues: Large ribosomal subunit protein bL36B (38 aa).

This sequence belongs to the bacterial ribosomal protein bL36 family.

The sequence is that of Large ribosomal subunit protein bL36B from Prochlorococcus marinus (strain MIT 9515).